We begin with the raw amino-acid sequence, 343 residues long: MGRRARSARSFGVSPLWGGVSVRSGDRGEAAVGGLWEVPDFWGLFPSRISPLAGEVESGTRVWLDGWRLVEEAGPGERLKASKVGRLVALAYPDAPADLLRWAADLFAWLTAFDDVHVEAPGVTTAELGPHMASFVGVLETGTAPGAAPTPFPAALAELLDRARELLTPLQEERVRARLGKVFVAMLWEITTRERTVSTAEYETMRPHTFFSAVGAALVEPCAGLDLSHGVRADPGVRRLTQALATLWERTNDLYSFAYEQRALGSVPRTLPWLIAQERGLPLDAAFAEAGRWCEEEAVLAHRLIGELSASAREGVPEYAGAVAHAIGGTRRLYEVSDRWREE.

Positions 114 and 119 each coordinate Mg(2+). A DDXXXE motif motif is present at residues 114–119; the sequence is DDVHVE. R206 contacts substrate. 3 residues coordinate Mg(2+): N252, S256, and E260. The NXXXSXXXE motif signature appears at 252 to 260; sequence NDLYSFAYE.

Belongs to the terpene synthase family. Mg(2+) serves as cofactor.

It carries out the reaction (13E)-labda-7,13-dien-15-yl diphosphate = labda-7,13(16),14-triene + diphosphate. In terms of biological role, involved in the biosynthesis of the labdane-type bicyclic diterpene labda-7,13(16),14-triene. Catalyzes the conversion of labda-7,13(E)-dienyl diphosphate to yield labda-7,13(16),14-triene. The polypeptide is Labda-7,13(16),14-triene synthase (Streptomyces clavuligerus).